Consider the following 251-residue polypeptide: UPF0246 protein DSY0297 (251 aa).

This sequence belongs to the UPF0246 family.

The sequence is that of UPF0246 protein DSY0297 from Desulfitobacterium hafniense (strain Y51).